The following is a 1063-amino-acid chain: Probable hemoglobin and hemoglobin-haptoglobin-binding protein 1 (1063 aa).

The first 24 residues, 1-24 (MTNFKFSLLACSIAFALNASIAYA), serve as a signal peptide directing secretion. A run of 7 repeats spans residues 26-29 (QPTN), 30-33 (QPTN), 34-37 (QPTN), 38-41 (QPTN), 42-45 (QPTN), 46-49 (QPTN), and 50-53 (QPTN). Residues 26–53 (QPTNQPTNQPTNQPTNQPTNQPTNQPTN) form a 7 X 4 AA tandem repeats of Q-P-T-N region. The span at 28–55 (TNQPTNQPTNQPTNQPTNQPTNQPTNQN) shows a compositional bias: low complexity. The interval 28–57 (TNQPTNQPTNQPTNQPTNQPTNQPTNQNSN) is disordered. The short motif at 63-70 (EQINVSGS) is the TonB box element. In terms of domain architecture, TBDR plug spans 66–200 (NVSGSSENIN…LGGSVIFETK (135 aa)). In terms of domain architecture, TBDR beta-barrel spans 208–1063 (DKDYYLSYKR…NYRMSVQFEF (856 aa)). A TonB C-terminal box motif is present at residues 1046–1063 (NRFYAPGRNYRMSVQFEF).

The protein belongs to the TonB-dependent receptor family. Hemoglobin/haptoglobin binding protein subfamily.

It localises to the cell outer membrane. Its function is as follows. Acts as a receptor for hemoglobin or the hemoglobin/haptoglobin complex of the human host and is required for heme uptake. This chain is Probable hemoglobin and hemoglobin-haptoglobin-binding protein 1, found in Haemophilus influenzae (strain ATCC 51907 / DSM 11121 / KW20 / Rd).